Here is a 170-residue protein sequence, read N- to C-terminus: Ergosterol biosynthetic protein 28 (170 aa).

A run of 3 helical transmembrane segments spans residues 7–27 (FLPEAKGVLPYYMIILSIISI), 116–136 (TLAYWTYIVAFSHFASELFVF), and 141–161 (FGLPQYFPFALASTSLIWMPL).

This sequence belongs to the ERG28 family. In terms of assembly, heterotetramer of ERG25, ERG26, ERG27 and ERG28. ERG28 acts as a scaffold to tether ERG27 and other 4,4-demethylation-related enzymes, forming a demethylation enzyme complex, in the endoplasmic reticulum.

Its subcellular location is the endoplasmic reticulum membrane. It functions in the pathway steroid metabolism; ergosterol biosynthesis. Functionally, sterol 24-C-methyltransferase; part of the third module of ergosterol biosynthesis pathway that includes the late steps of the pathway. ERG28 has a role as a scaffold to help anchor the catalytic components of the C-4 demethylation complex ERG25, ERG26 and ERG27 to the endoplasmic reticulum. The third module or late pathway involves the ergosterol synthesis itself through consecutive reactions that mainly occur in the endoplasmic reticulum (ER) membrane. Firstly, the squalene synthase ERG9 catalyzes the condensation of 2 farnesyl pyrophosphate moieties to form squalene, which is the precursor of all steroids. Squalene synthase is crucial for balancing the incorporation of farnesyl diphosphate (FPP) into sterol and nonsterol isoprene synthesis. Secondly, squalene is converted into lanosterol by the consecutive action of the squalene epoxidase ERG1 and the lanosterol synthase ERG7. Then, the delta(24)-sterol C-methyltransferase ERG6 methylates lanosterol at C-24 to produce eburicol. Eburicol is the substrate of the sterol 14-alpha demethylase encoded by CYP51A, CYP51B and CYP51C, to yield 4,4,24-trimethyl ergosta-8,14,24(28)-trienol. CYP51B encodes the enzyme primarily responsible for sterol 14-alpha-demethylation, and plays an essential role in ascospore formation. CYP51A encodes an additional sterol 14-alpha-demethylase, induced on ergosterol depletion and responsible for the intrinsic variation in azole sensitivity. The third CYP51 isoform, CYP51C, does not encode a sterol 14-alpha-demethylase, but is required for full virulence on host wheat ears. The C-14 reductase ERG24 then reduces the C14=C15 double bond which leads to 4,4-dimethylfecosterol. A sequence of further demethylations at C-4, involving the C-4 demethylation complex containing the C-4 methylsterol oxidases ERG25, the sterol-4-alpha-carboxylate 3-dehydrogenase ERG26 and the 3-keto-steroid reductase ERG27, leads to the production of fecosterol via 4-methylfecosterol. ERG28 has a role as a scaffold to help anchor ERG25, ERG26 and ERG27 to the endoplasmic reticulum. The C-8 sterol isomerase ERG2 then catalyzes the reaction which results in unsaturation at C-7 in the B ring of sterols and thus converts fecosterol to episterol. The sterol-C5-desaturases ERG3A and ERG3BB then catalyze the introduction of a C-5 double bond in the B ring to produce 5-dehydroepisterol. The C-22 sterol desaturases ERG5A and ERG5B further convert 5-dehydroepisterol into ergosta-5,7,22,24(28)-tetraen-3beta-ol by forming the C-22(23) double bond in the sterol side chain. Finally, ergosta-5,7,22,24(28)-tetraen-3beta-ol is substrate of the C-24(28) sterol reductase ERG4 to produce ergosterol. The chain is Ergosterol biosynthetic protein 28 from Gibberella zeae (strain ATCC MYA-4620 / CBS 123657 / FGSC 9075 / NRRL 31084 / PH-1) (Wheat head blight fungus).